Consider the following 127-residue polypeptide: Protein FAM229A (127 aa).

The tract at residues 1 to 96 (MLPSSTPGPG…ATEHNPVRPL (96 aa)) is disordered. Residues 24–39 (RSPAARAPAAASSLGP) are compositionally biased toward low complexity.

The protein belongs to the FAM229 family.

The protein is Protein FAM229A (FAM229A) of Homo sapiens (Human).